A 140-amino-acid polypeptide reads, in one-letter code: Profilin (140 aa).

The residue at position 2 (Ser2) is an N-acetylserine.

The protein belongs to the profilin family. In terms of assembly, occurs in many kinds of cells as a complex with monomeric actin in a 1:1 ratio.

It localises to the cytoplasm. The protein resides in the cytoskeleton. Binds to actin and affects the structure of the cytoskeleton. At high concentrations, profilin prevents the polymerization of actin, whereas it enhances it at low concentrations. By binding to PIP2, it inhibits the formation of IP3 and DG. The protein is Profilin of Clypeaster japonicus (Sand dollar).